A 170-amino-acid chain; its full sequence is Myosin regulatory light chain 2, skeletal muscle isoform (170 aa).

Alanine 2 bears the N,N,N-trimethylalanine mark. A phosphoserine mark is found at serine 16 and serine 17. Residues threonine 26 and threonine 36 each carry the phosphothreonine modification. An EF-hand 1 domain is found at 26-61; it reads TQIQEFKEAFTVIDQNRDGIIDKEDLRDTFAAMGRL. Aspartate 39, asparagine 41, aspartate 43, and aspartate 50 together coordinate Ca(2+). Serine 76 is modified (phosphoserine). EF-hand domains follow at residues 96–131 and 132–167; these read DPED…QCDR and FSQE…GDAK. Residue threonine 102 is modified to Phosphothreonine.

Myosin is a hexamer of 2 heavy chains and 4 light chains.

Its function is as follows. Plays a role in muscle contraction. The polypeptide is Myosin regulatory light chain 2, skeletal muscle isoform (Bos taurus (Bovine)).